We begin with the raw amino-acid sequence, 571 residues long: Proline--tRNA ligase (571 aa).

Belongs to the class-II aminoacyl-tRNA synthetase family. ProS type 1 subfamily. Homodimer.

It localises to the cytoplasm. The catalysed reaction is tRNA(Pro) + L-proline + ATP = L-prolyl-tRNA(Pro) + AMP + diphosphate. Functionally, catalyzes the attachment of proline to tRNA(Pro) in a two-step reaction: proline is first activated by ATP to form Pro-AMP and then transferred to the acceptor end of tRNA(Pro). As ProRS can inadvertently accommodate and process non-cognate amino acids such as alanine and cysteine, to avoid such errors it has two additional distinct editing activities against alanine. One activity is designated as 'pretransfer' editing and involves the tRNA(Pro)-independent hydrolysis of activated Ala-AMP. The other activity is designated 'posttransfer' editing and involves deacylation of mischarged Ala-tRNA(Pro). The misacylated Cys-tRNA(Pro) is not edited by ProRS. In Vibrio cholerae serotype O1 (strain ATCC 39541 / Classical Ogawa 395 / O395), this protein is Proline--tRNA ligase.